The primary structure comprises 113 residues: Biotrophy-associated secreted protein 3 (113 aa).

Positions 1–20 (MQFSTVSFAIFAILPAMVAA) are cleaved as a signal peptide.

Its subcellular location is the secreted. Secreted effector involved in biotrophic colonization of plant cells. This Pyricularia oryzae (strain 70-15 / ATCC MYA-4617 / FGSC 8958) (Rice blast fungus) protein is Biotrophy-associated secreted protein 3.